Consider the following 352-residue polypeptide: Guanine nucleotide-binding protein alpha-7 subunit (352 aa).

Gly-2 carries N-myristoyl glycine lipidation. Cys-4 carries S-palmitoyl cysteine lipidation. Residues 32–352 (RIIKLLLLGA…AKNLKSMGLC (321 aa)) enclose the G-alpha domain. The tract at residues 35 to 48 (KLLLLGAGESGKST) is G1 motif. GTP is bound by residues 40–47 (GAGESGKS), 174–180 (LRTRIKT), 199–203 (DVGGQ), 268–271 (NKKD), and Ala-324. Positions 47 and 180 each coordinate Mg(2+). The G2 motif stretch occupies residues 172–180 (DLLRTRIKT). The tract at residues 195–204 (FRVIDVGGQR) is G3 motif. Positions 264–271 (ILFLNKKD) are G4 motif. A G5 motif region spans residues 322–327 (TCATDT).

It belongs to the G-alpha family. G(i/o/t/z) subfamily. G proteins are composed of 3 units; alpha, beta and gamma. The alpha chain contains the guanine nucleotide binding site.

Its function is as follows. Guanine nucleotide-binding proteins (G proteins) are involved as modulators or transducers in various transmembrane signaling systems. The polypeptide is Guanine nucleotide-binding protein alpha-7 subunit (gpa-7) (Caenorhabditis briggsae).